A 56-amino-acid polypeptide reads, in one-letter code: Turripeptide XIV-01 (56 aa).

A signal peptide spans Met-1–Ala-21. The propeptide occupies Lys-22–Glu-30.

In terms of processing, contains 2 disulfide bonds. As to expression, expressed by the venom duct.

The protein localises to the secreted. The chain is Turripeptide XIV-01 from Gemmula speciosa (Splendid gem-turris).